The primary structure comprises 604 residues: Elongation factor 4 (604 aa).

Residues 9 to 191 (DAIRNFCIIA…AVISRVPAPA (183 aa)) enclose the tr-type G domain. GTP-binding positions include 21-26 (DHGKST) and 138-141 (NKID).

It belongs to the TRAFAC class translation factor GTPase superfamily. Classic translation factor GTPase family. LepA subfamily.

The protein localises to the cell inner membrane. The catalysed reaction is GTP + H2O = GDP + phosphate + H(+). Its function is as follows. Required for accurate and efficient protein synthesis under certain stress conditions. May act as a fidelity factor of the translation reaction, by catalyzing a one-codon backward translocation of tRNAs on improperly translocated ribosomes. Back-translocation proceeds from a post-translocation (POST) complex to a pre-translocation (PRE) complex, thus giving elongation factor G a second chance to translocate the tRNAs correctly. Binds to ribosomes in a GTP-dependent manner. The chain is Elongation factor 4 from Prosthecochloris aestuarii (strain DSM 271 / SK 413).